The sequence spans 191 residues: A-type ATP synthase subunit E 1 (191 aa).

Belongs to the V-ATPase E subunit family. Has multiple subunits with at least A(3), B(3), C, D, E, F, H, I and proteolipid K(x).

It localises to the cell membrane. Functionally, component of the A-type ATP synthase that produces ATP from ADP in the presence of a proton gradient across the membrane. The chain is A-type ATP synthase subunit E 1 from Methanospirillum hungatei JF-1 (strain ATCC 27890 / DSM 864 / NBRC 100397 / JF-1).